Here is a 426-residue protein sequence, read N- to C-terminus: Serine hydroxymethyltransferase (426 aa).

(6S)-5,6,7,8-tetrahydrofolate contacts are provided by residues leucine 118 and 122 to 124 (GHL). Lysine 227 bears the N6-(pyridoxal phosphate)lysine mark.

This sequence belongs to the SHMT family. Homodimer. The cofactor is pyridoxal 5'-phosphate.

The protein localises to the cytoplasm. It carries out the reaction (6R)-5,10-methylene-5,6,7,8-tetrahydrofolate + glycine + H2O = (6S)-5,6,7,8-tetrahydrofolate + L-serine. It participates in one-carbon metabolism; tetrahydrofolate interconversion. Its pathway is amino-acid biosynthesis; glycine biosynthesis; glycine from L-serine: step 1/1. Functionally, catalyzes the reversible interconversion of serine and glycine with tetrahydrofolate (THF) serving as the one-carbon carrier. This reaction serves as the major source of one-carbon groups required for the biosynthesis of purines, thymidylate, methionine, and other important biomolecules. Also exhibits THF-independent aldolase activity toward beta-hydroxyamino acids, producing glycine and aldehydes, via a retro-aldol mechanism. The chain is Serine hydroxymethyltransferase from Mycobacterium leprae (strain Br4923).